Consider the following 317-residue polypeptide: Tyrosine--tRNA ligase (317 aa).

Position 32 (Tyr-32) interacts with L-tyrosine. A 'HIGH' region motif is present at residues 37 to 45 (PSGEIHLGH). The L-tyrosine site is built by Tyr-152, Gln-156, Asp-159, and Gln-174. The 'KMSKS' region signature appears at 208-212 (KMSSS). ATP is bound at residue Ser-211.

This sequence belongs to the class-I aminoacyl-tRNA synthetase family. TyrS type 3 subfamily. In terms of assembly, homodimer.

It is found in the cytoplasm. It catalyses the reaction tRNA(Tyr) + L-tyrosine + ATP = L-tyrosyl-tRNA(Tyr) + AMP + diphosphate + H(+). Functionally, catalyzes the attachment of tyrosine to tRNA(Tyr) in a two-step reaction: tyrosine is first activated by ATP to form Tyr-AMP and then transferred to the acceptor end of tRNA(Tyr). The chain is Tyrosine--tRNA ligase from Methanocorpusculum labreanum (strain ATCC 43576 / DSM 4855 / Z).